Reading from the N-terminus, the 740-residue chain is Elongation factor 2 (740 aa).

The tr-type G domain occupies 23–264; the sequence is AQIRNAGTLA…MIIEHIPPPN (242 aa). GTP contacts are provided by residues 32–39, 98–102, and 152–155; these read AHVDHGKT, DTPGH, and NKID. The residue at position 605 (H605) is a Diphthamide.

It belongs to the TRAFAC class translation factor GTPase superfamily. Classic translation factor GTPase family. EF-G/EF-2 subfamily.

Its subcellular location is the cytoplasm. Its function is as follows. Catalyzes the GTP-dependent ribosomal translocation step during translation elongation. During this step, the ribosome changes from the pre-translocational (PRE) to the post-translocational (POST) state as the newly formed A-site-bound peptidyl-tRNA and P-site-bound deacylated tRNA move to the P and E sites, respectively. Catalyzes the coordinated movement of the two tRNA molecules, the mRNA and conformational changes in the ribosome. This Pyrobaculum aerophilum (strain ATCC 51768 / DSM 7523 / JCM 9630 / CIP 104966 / NBRC 100827 / IM2) protein is Elongation factor 2.